The primary structure comprises 60 residues: Large ribosomal subunit protein bL32 (60 aa).

Residues 1–60 form a disordered region; the sequence is MAVQQNKKTPSKRGMHRSHDFLVAPQLSVEPTTGETHMRHHISPNGFYRGRKVLKTKNDE. Residues 49–60 are compositionally biased toward basic residues; the sequence is RGRKVLKTKNDE.

Belongs to the bacterial ribosomal protein bL32 family.

In Janthinobacterium sp. (strain Marseille) (Minibacterium massiliensis), this protein is Large ribosomal subunit protein bL32.